A 448-amino-acid chain; its full sequence is MGLSPVNIFKPFGLGRAKAVIAAVSGGSDSLGLLFLLKDYLSTLESPPVLIAVTVDHKLRAESALEAENVGLLCQKHGIMHCVLSWDDPKPAHGLAAAARTARYRLLVQAARDAGAGFIVTGHTENDQIETFLMRKARSGHCEARGLAAMSPRSLLEGSVELARPLLTVSRQALRDELTRRGIAWVDDPSNANIDYERPRVRLGVAAEADGQEVLEQIAQAGAARERNNAALVEALADPATLGVDAAGMMFLNADCYAALSPGARQLFSGLLASIAGGRRFLPGDGERRRIERMLSGQDAPRRLTVFGALIERGEKGAPHRFRRERRNLPKLDLVPGQHIVWDGRFCFFNSGGRSFEIAPPGRQELIDFLKNSGRDIESRRCEALLISPALYEGGKLAFVPFLPGAEWPQGVHIERHFAIFDHVLPGHDFALAQAVEARLGRACAEIS.

25-30 (SGGSDS) lines the ATP pocket.

Belongs to the tRNA(Ile)-lysidine synthase family.

It localises to the cytoplasm. The catalysed reaction is cytidine(34) in tRNA(Ile2) + L-lysine + ATP = lysidine(34) in tRNA(Ile2) + AMP + diphosphate + H(+). Functionally, ligates lysine onto the cytidine present at position 34 of the AUA codon-specific tRNA(Ile) that contains the anticodon CAU, in an ATP-dependent manner. Cytidine is converted to lysidine, thus changing the amino acid specificity of the tRNA from methionine to isoleucine. This Brucella melitensis biotype 2 (strain ATCC 23457) protein is tRNA(Ile)-lysidine synthase.